The chain runs to 452 residues: Pup--protein ligase (452 aa).

Position 9 (E9) interacts with Mg(2+). R53 provides a ligand contact to ATP. Y55 lines the Mg(2+) pocket. The Proton acceptor role is filled by D57. E63 is a Mg(2+) binding site. ATP is bound by residues T66 and W419.

Belongs to the Pup ligase/Pup deamidase family. Pup-conjugating enzyme subfamily.

It carries out the reaction ATP + [prokaryotic ubiquitin-like protein]-L-glutamate + [protein]-L-lysine = ADP + phosphate + N(6)-([prokaryotic ubiquitin-like protein]-gamma-L-glutamyl)-[protein]-L-lysine.. The protein operates within protein degradation; proteasomal Pup-dependent pathway. It participates in protein modification; protein pupylation. Functionally, catalyzes the covalent attachment of the prokaryotic ubiquitin-like protein modifier Pup to the proteasomal substrate proteins, thereby targeting them for proteasomal degradation. This tagging system is termed pupylation. The ligation reaction involves the side-chain carboxylate of the C-terminal glutamate of Pup and the side-chain amino group of a substrate lysine. The protein is Pup--protein ligase of Gordonia bronchialis (strain ATCC 25592 / DSM 43247 / BCRC 13721 / JCM 3198 / KCTC 3076 / NBRC 16047 / NCTC 10667) (Rhodococcus bronchialis).